We begin with the raw amino-acid sequence, 302 residues long: Small ribosomal subunit protein uS2 (302 aa).

A disordered region spans residues 275–302 (EGEGESEAEPVVAKKKPVRAKRPAVKAE). The segment covering 287–302 (AKKKPVRAKRPAVKAE) has biased composition (basic residues).

It belongs to the universal ribosomal protein uS2 family.

The sequence is that of Small ribosomal subunit protein uS2 from Opitutus terrae (strain DSM 11246 / JCM 15787 / PB90-1).